The primary structure comprises 161 residues: Allophycocyanin alpha chain (161 aa).

An N4-methylasparagine modification is found at asparagine 71. Cysteine 81 contributes to the (2R,3E)-phycocyanobilin binding site.

It belongs to the phycobiliprotein family. In terms of assembly, heterodimer of an alpha and a beta chain. In terms of processing, contains one covalently linked phycocyanobilin chromophore.

It localises to the plastid. It is found in the chloroplast thylakoid membrane. In terms of biological role, light-harvesting photosynthetic bile pigment-protein from the phycobiliprotein complex. Allophycocyanin has a maximum absorption at approximately 650 nanometers. In Porphyra purpurea (Red seaweed), this protein is Allophycocyanin alpha chain (apcA).